The sequence spans 375 residues: Alanine racemase (375 aa).

Lys45 functions as the Proton acceptor; specific for D-alanine in the catalytic mechanism. At Lys45 the chain carries N6-(pyridoxal phosphate)lysine. Arg141 contributes to the substrate binding site. Residue Tyr270 is the Proton acceptor; specific for L-alanine of the active site. Met318 contacts substrate.

The protein belongs to the alanine racemase family. The cofactor is pyridoxal 5'-phosphate.

It carries out the reaction L-alanine = D-alanine. Its pathway is amino-acid biosynthesis; D-alanine biosynthesis; D-alanine from L-alanine: step 1/1. Its function is as follows. Catalyzes the interconversion of L-alanine and D-alanine. May also act on other amino acids. The polypeptide is Alanine racemase (alr) (Pseudoalteromonas atlantica (strain T6c / ATCC BAA-1087)).